The chain runs to 263 residues: Proteasome subunit alpha type-1 (263 aa).

An N-acetylmethionine modification is found at M1. A Phosphoserine; alternate modification is found at S110. S110 carries O-linked (GlcNAc) serine; alternate glycosylation. K115 is covalently cross-linked (Glycyl lysine isopeptide (Lys-Gly) (interchain with G-Cter in ubiquitin)). At S177 the chain carries Phosphoserine. A Glycyl lysine isopeptide (Lys-Gly) (interchain with G-Cter in ubiquitin) cross-link involves residue K208. The tract at residues 232–263 is disordered; that stretch reads FLEGLEERPQRKAQPAQPADEPAEKADEPMEH. Positions 253–263 are enriched in basic and acidic residues; it reads PAEKADEPMEH.

This sequence belongs to the peptidase T1A family. The 26S proteasome consists of a 20S proteasome core and two 19S regulatory subunits. The 20S proteasome core is a barrel-shaped complex made of 28 subunits that are arranged in four stacked rings. The two outer rings are each formed by seven alpha subunits, and the two inner rings are formed by seven beta subunits. The proteolytic activity is exerted by three beta-subunits PSMB5, PSMB6 and PSMB7. Interacts with NOTCH3. Interacts with ZFAND1.

It is found in the cytoplasm. The protein resides in the nucleus. Functionally, component of the 20S core proteasome complex involved in the proteolytic degradation of most intracellular proteins. This complex plays numerous essential roles within the cell by associating with different regulatory particles. Associated with two 19S regulatory particles, forms the 26S proteasome and thus participates in the ATP-dependent degradation of ubiquitinated proteins. The 26S proteasome plays a key role in the maintenance of protein homeostasis by removing misfolded or damaged proteins that could impair cellular functions, and by removing proteins whose functions are no longer required. Associated with the PA200 or PA28, the 20S proteasome mediates ubiquitin-independent protein degradation. This type of proteolysis is required in several pathways including spermatogenesis (20S-PA200 complex) or generation of a subset of MHC class I-presented antigenic peptides (20S-PA28 complex). This chain is Proteasome subunit alpha type-1 (PSMA1), found in Macaca fascicularis (Crab-eating macaque).